We begin with the raw amino-acid sequence, 840 residues long: Heat shock 70 kDa protein 4 (840 aa).

Lys53 is subject to N6-acetyllysine. Position 76 is a phosphoserine (Ser76). Tyr89 and Tyr336 each carry phosphotyrosine. Residues Ser393 and Ser415 each carry the phosphoserine modification. At Lys430 the chain carries N6-acetyllysine. The disordered stretch occupies residues 500 to 575 (VHKSEENEEP…QAKKAKVKTS (76 aa)). Residues 514–533 (QNAKEEEKMQVDQEEPHVEE) show a composition bias toward basic and acidic residues. Thr538 is modified (phosphothreonine). 2 positions are modified to phosphoserine: Ser546 and Ser647. The residue at position 660 (Tyr660) is a Phosphotyrosine. An N6-acetyllysine modification is found at Lys679. Phosphoserine is present on Ser756. Lys773 is subject to N6-methyllysine. The disordered stretch occupies residues 779–840 (CSPIISKPKP…DKKLPEMDID (62 aa)). Basic and acidic residues-rich tracts occupy residues 788 to 799 (PKVEPPKEEQKN) and 829 to 840 (DSDKKLPEMDID).

The protein belongs to the heat shock protein 70 family. Interacts with TJP1/ZO-1.

It localises to the cytoplasm. In Homo sapiens (Human), this protein is Heat shock 70 kDa protein 4 (HSPA4).